Reading from the N-terminus, the 405-residue chain is MEPQSQSMTLEVPLSLGRYHISEEYGFLLPNPLEALPDHYKPWMEIALRLPHLIENRQLRAHVYRMPLLDCRFLKSYREQRLAHMALAAITMGFVWQEGEGQPQKVLPRSLAIPFVEVSRNLGLPPILVHSDLVLTNWTKRNPEGPLEISNLETIISFPGGESLRGFILVTVLVEKAAVPGLKALVQGMEAIRQHSQDTLLEALQQLRLSIQDITRALAQMHDYVDPDIFYSVIRIFLSGWKDNPAMPVGLVYEGVATEPLKYSGGSAAQSSVLHAFDEFLGIEHCKESVGFLHRMRDYMPPSHKAFLEDLHVAPSLRDYILASGPGDCLMAYNQCVEALGELRSYHINVVARYIISAATRARSRGLTNPSPHALEDRGTGGTAMLSFLKSVREKTMEALLCPGA.

His347 is a binding site for heme.

This sequence belongs to the indoleamine 2,3-dioxygenase family. Heme is required as a cofactor. Expressed mainly in antigen-presenting immune cells, liver, kidney, brain, and placenta. Highly expressed in kidney, followed by epididymis and liver (at protein level). Detected in the tails of the spermatozoa in the testis and in the kidney tubules (at protein level). Constitutively expressed in brain.

It catalyses the reaction L-tryptophan + O2 = N-formyl-L-kynurenine. It participates in amino-acid degradation; L-tryptophan degradation via kynurenine pathway; L-kynurenine from L-tryptophan: step 1/2. With respect to regulation, activity is inhibited by D-1MT (1-methyl-D-tryptophan) and MTH-trp (methylthiohydantoin-DL-tryptophan) but not L-1MT (1-methyl-L-tryptophan). Its function is as follows. Catalyzes the first and rate-limiting step in the kynurenine pathway of tryptophan catabolism. Involved in immune regulation. The chain is Indoleamine 2,3-dioxygenase 2 from Mus musculus (Mouse).